Here is a 252-residue protein sequence, read N- to C-terminus: MFS-type transporter cctQ (252 aa).

A run of 2 helical transmembrane segments spans residues 54–74 and 116–136; these read IGSL…VVLP and FGSF…IVGF. Asn-179 is a glycosylation site (N-linked (GlcNAc...) asparagine). Helical transmembrane passes span 180 to 200 and 208 to 228; these read FSIC…WILA and FLVW…YFTT.

This sequence belongs to the major facilitator superfamily.

It is found in the membrane. It participates in mycotoxin biosynthesis. Functionally, MFS-type transporter; part of the gene cluster that mediates the biosynthesis of the mycotoxin cyclochlorotine, a hepatotoxic and carcinogenic cyclic chlorinated pentapeptide. Most likely responsible for cyclochlorotine secretion and thereby may contribute to intrinsic resistance. The polypeptide is MFS-type transporter cctQ (Talaromyces islandicus (Penicillium islandicum)).